The sequence spans 251 residues: Flap endonuclease Xni (251 aa).

Asp-104 provides a ligand contact to Mg(2+). The region spanning 160–249 (VLPRQLPDYW…IDGNLQQLRL (90 aa)) is the 5'-3' exonuclease domain. K(+)-binding residues include Leu-171, Ala-172, Pro-180, Val-182, and Ile-185. The tract at residues 184-189 (GIGPKS) is interaction with DNA.

Belongs to the Xni family. Requires Mg(2+) as cofactor. It depends on K(+) as a cofactor.

In terms of biological role, has flap endonuclease activity. During DNA replication, flap endonucleases cleave the 5'-overhanging flap structure that is generated by displacement synthesis when DNA polymerase encounters the 5'-end of a downstream Okazaki fragment. The polypeptide is Flap endonuclease Xni (Salmonella paratyphi A (strain ATCC 9150 / SARB42)).